A 250-amino-acid chain; its full sequence is tRNA pseudouridine synthase A (250 aa).

Catalysis depends on Asp-52, which acts as the Nucleophile. Substrate is bound at residue Tyr-111.

Belongs to the tRNA pseudouridine synthase TruA family. As to quaternary structure, homodimer.

The enzyme catalyses uridine(38/39/40) in tRNA = pseudouridine(38/39/40) in tRNA. Functionally, formation of pseudouridine at positions 38, 39 and 40 in the anticodon stem and loop of transfer RNAs. The chain is tRNA pseudouridine synthase A from Methylobacterium sp. (strain 4-46).